We begin with the raw amino-acid sequence, 94 residues long: MSAEPEVRLTAWVHGRVQGVGFRWWTRSRALELGLTGFAANKPDGRVQVVAQGSREDCERLLGLLEGGDTPGRVDKVIADWSDAREQITGFHER.

Positions 8–94 (RLTAWVHGRV…REQITGFHER (87 aa)) constitute an Acylphosphatase-like domain. Active-site residues include arginine 23 and asparagine 41.

This sequence belongs to the acylphosphatase family.

The catalysed reaction is an acyl phosphate + H2O = a carboxylate + phosphate + H(+). In Mycobacterium sp. (strain KMS), this protein is Acylphosphatase (acyP).